The following is a 1790-amino-acid chain: Non-reducing polyketide synthase gsfA (1790 aa).

The N-terminal acylcarrier protein transacylase domain (SAT) stretch occupies residues 20–263 (GDQRTLFRKL…AMRKIQGMWH (244 aa)). A Ketosynthase family 3 (KS3) domain is found at 392–822 (SSKIAVVGMS…GGNTAMIIEE (431 aa)). Catalysis depends on for beta-ketoacyl synthase activity residues Cys563, His698, and His741. Residues 922-1223 (FAFAGQGTFY…CSTLHRDSDN (302 aa)) form a malonyl-CoA:ACP transacylase (MAT) domain region. Positions 1298–1615 (TSSIHRLYSE…PRIMLNRFFQ (318 aa)) are product template (PT) domain. An N-terminal hotdog fold region spans residues 1302 to 1435 (HRLYSENYDS…AYYEDPSTWL (134 aa)). In terms of domain architecture, PKS/mFAS DH spans 1302 to 1611 (HRLYSENYDS…FRQWPRIMLN (310 aa)). His1334 serves as the catalytic Proton acceptor; for dehydratase activity. A C-terminal hotdog fold region spans residues 1460–1611 (MANKLTTSLA…FRQWPRIMLN (152 aa)). The active-site Proton donor; for dehydratase activity is the Asp1518. Disordered stretches follow at residues 1621-1648 (PPAP…EKTT) and 1686-1718 (LDYS…ADGA). A compositionally biased stretch (basic and acidic residues) spans 1699 to 1708 (SDERIEKTDS). One can recognise a Carrier domain in the interval 1716-1790 (DGANDVTSRA…TIGDLKKLLS (75 aa)). Residue Ser1753 is modified to O-(pantetheine 4'-phosphoryl)serine.

It catalyses the reaction 6 malonyl-CoA + acetyl-CoA + 4 H(+) = 2-(2,4-dihydroxy-6-oxidobenzoyl)-5-hydroxy-3-methylbenzenolate + 6 CO2 + 7 CoA + H2O. The protein operates within secondary metabolite biosynthesis; terpenoid biosynthesis. Its function is as follows. Norlichexanthone synthase; part of the gene cluster that mediates the biosynthesis of griseofulvin, an important antifungal drug that has been in use for a long time for treating dermatophyte infections. The first step of the pathway is the formation of the heptaketide backbone by gsfA which is initiated by priming with acetyl-CoA, followed by sequential condensations of 6 malonyl-CoA units. The resulting benzophenone can undergo a spontaneous dehydration to form norlichexanthone. However, the true precursor for the griseofulvin biosynthesis is not norlichexanthone, but the heptaketide benzophenone that is O-methylated at 3-OH by gsfB to produce griseophenone D which is further methylated at 9-OH by gsfC to yield griseophenone C. Griseophenone C is then substrate of halogenase gsfI which is responsible for the regio-specific chlorination at the C13 position to form griseophenone B. The cytochrome P450 gsfF catalyzes the coupling of orcinol and phloroglucinol rings in griseophenone B to form desmethyl-dehydrogriseofulvin A which is further methylated at 5-OH by gsfD to yield dehydrogriseofulvin. Finally, gsfE performs stereospecific reduction of enone 18 of dehydrogriseofulvin to afford the final product griseofulvin. The protein is Non-reducing polyketide synthase gsfA of Penicillium aethiopicum.